The primary structure comprises 598 residues: Vanadium-dependent bromoperoxidase (598 aa).

Phenylalanine 361, glutamine 363, aspartate 365, aspartate 368, and glutamine 370 together coordinate Ca(2+). 2 residues coordinate vanadate: lysine 400 and arginine 408. Histidine 480 is a catalytic residue. Vanadate contacts are provided by serine 485, glycine 486, histidine 487, arginine 547, and histidine 553. Histidine 487 is an active-site residue.

Belongs to the vanadium-dependent haloperoxidase family. Homododecamer. Ca(2+) serves as cofactor. The cofactor is vanadate.

It catalyses the reaction RH + Br(-) + H2O2 = RBr + 2 H2O.. Catalyzes the halogenation of organic substrates in the presence of hydrogen peroxide. The polypeptide is Vanadium-dependent bromoperoxidase (Corallina officinalis (Coral seaweed)).